Reading from the N-terminus, the 136-residue chain is uncharacterized protein (136 aa).

It localises to the cytoplasm. It is found in the nucleus. This is an uncharacterized protein from Schizosaccharomyces pombe (strain 972 / ATCC 24843) (Fission yeast).